A 96-amino-acid polypeptide reads, in one-letter code: Large ribosomal subunit protein bL27 (96 aa).

The propeptide occupies 1–9; it reads MLKFDIQHF. The segment at 1 to 33 is disordered; sequence MLKFDIQHFAHKKGGGSTSNGRDSESKRLGAKR. A compositionally biased stretch (basic and acidic residues) spans 22–33; that stretch reads RDSESKRLGAKR.

This sequence belongs to the bacterial ribosomal protein bL27 family. Post-translationally, the N-terminus is cleaved by ribosomal processing cysteine protease Prp.

This Listeria innocua serovar 6a (strain ATCC BAA-680 / CLIP 11262) protein is Large ribosomal subunit protein bL27.